Reading from the N-terminus, the 1068-residue chain is Carbamoyl phosphate synthase large chain (1068 aa).

Residues 1-401 form a carboxyphosphate synthetic domain region; that stretch reads MPLNKDIKKV…AFLKGIRSLE (401 aa). The ATP site is built by arginine 129, arginine 169, glycine 175, glycine 176, lysine 208, valine 210, glutamate 215, glycine 241, isoleucine 242, histidine 243, glutamine 284, and glutamate 298. An ATP-grasp 1 domain is found at 133-327; that stretch reads RNVMSRINEP…IAKVAAKIAL (195 aa). Mg(2+)-binding residues include glutamine 284, glutamate 298, and asparagine 300. 3 residues coordinate Mn(2+): glutamine 284, glutamate 298, and asparagine 300. The oligomerization domain stretch occupies residues 402 to 549; the sequence is IGKYSLEHKK…YSTYDVYDEV (148 aa). Residues 550 to 932 form a carbamoyl phosphate synthetic domain region; the sequence is EVSKNKKVIV…ALYKGFIGAN (383 aa). Positions 674 to 864 constitute an ATP-grasp 2 domain; it reads DELLEKLQIS…IVDIATRVML (191 aa). Residues arginine 710, lysine 749, leucine 751, glutamate 755, glycine 780, valine 781, histidine 782, serine 783, glutamine 823, and glutamate 835 each contribute to the ATP site. Mg(2+)-binding residues include glutamine 823, glutamate 835, and asparagine 837. Mn(2+) contacts are provided by glutamine 823, glutamate 835, and asparagine 837. The 136-residue stretch at 933 to 1068 folds into the MGS-like domain; the sequence is MSIKKEKGTI…ETLHIFDLSN (136 aa). Residues 933–1068 are allosteric domain; the sequence is MSIKKEKGTI…ETLHIFDLSN (136 aa).

Belongs to the CarB family. In terms of assembly, composed of two chains; the small (or glutamine) chain promotes the hydrolysis of glutamine to ammonia, which is used by the large (or ammonia) chain to synthesize carbamoyl phosphate. Tetramer of heterodimers (alpha,beta)4. Requires Mg(2+) as cofactor. Mn(2+) is required as a cofactor.

The catalysed reaction is hydrogencarbonate + L-glutamine + 2 ATP + H2O = carbamoyl phosphate + L-glutamate + 2 ADP + phosphate + 2 H(+). The enzyme catalyses hydrogencarbonate + NH4(+) + 2 ATP = carbamoyl phosphate + 2 ADP + phosphate + 2 H(+). It functions in the pathway amino-acid biosynthesis; L-arginine biosynthesis; carbamoyl phosphate from bicarbonate: step 1/1. It participates in pyrimidine metabolism; UMP biosynthesis via de novo pathway; (S)-dihydroorotate from bicarbonate: step 1/3. Its function is as follows. Large subunit of the glutamine-dependent carbamoyl phosphate synthetase (CPSase). CPSase catalyzes the formation of carbamoyl phosphate from the ammonia moiety of glutamine, carbonate, and phosphate donated by ATP, constituting the first step of 2 biosynthetic pathways, one leading to arginine and/or urea and the other to pyrimidine nucleotides. The large subunit (synthetase) binds the substrates ammonia (free or transferred from glutamine from the small subunit), hydrogencarbonate and ATP and carries out an ATP-coupled ligase reaction, activating hydrogencarbonate by forming carboxy phosphate which reacts with ammonia to form carbamoyl phosphate. The chain is Carbamoyl phosphate synthase large chain from Clostridium botulinum (strain Loch Maree / Type A3).